The primary structure comprises 357 residues: 3-isopropylmalate dehydrogenase (357 aa).

Residue 76 to 89 (GPQWDTIDPSLRPE) coordinates NAD(+). 4 residues coordinate substrate: R96, R106, R134, and D224. Mg(2+) contacts are provided by D224, D248, and D252. 282–294 (GSAPDIAGKGIAN) serves as a coordination point for NAD(+).

The protein belongs to the isocitrate and isopropylmalate dehydrogenases family. LeuB type 1 subfamily. In terms of assembly, homodimer. It depends on Mg(2+) as a cofactor. Requires Mn(2+) as cofactor.

It is found in the cytoplasm. The catalysed reaction is (2R,3S)-3-isopropylmalate + NAD(+) = 4-methyl-2-oxopentanoate + CO2 + NADH. Its pathway is amino-acid biosynthesis; L-leucine biosynthesis; L-leucine from 3-methyl-2-oxobutanoate: step 3/4. Its function is as follows. Catalyzes the oxidation of 3-carboxy-2-hydroxy-4-methylpentanoate (3-isopropylmalate) to 3-carboxy-4-methyl-2-oxopentanoate. The product decarboxylates to 4-methyl-2 oxopentanoate. The protein is 3-isopropylmalate dehydrogenase of Xanthomonas euvesicatoria pv. vesicatoria (strain 85-10) (Xanthomonas campestris pv. vesicatoria).